A 638-amino-acid polypeptide reads, in one-letter code: MTSDATGSELIKSKLVDAPECAGVYQMFDVNKQVIYVGKAKNLKKRLTNYIKLDLDNKTLRMIANTCFLEYSVTSSEVEALLLEAQLIKKFQPKFNILLKDDKSFPFIKLRLDHDFPQLLKYRGRTRTLSDGKFFGPFASATAVNTTLTELQKIFKLRSCTDNYFNSRNRPCLQYEIKRCYAPCISKINKKDYAELVIQVTAFLQGHTKELQENLSKKMEELSSHMYFEEAAEIRDRIKALSYVQLKAGISDIVKDADIMAIVEKNGHYCVEVCLYRAGQACGTIPYFPTAMGNNTKEAILKYFLLQFYQKQQLPSEIIINNEVEDKEDVIEAIKKINNITKLNIILPISGGKAKLVQNATTNALFSLEQYLKKFAKNQEIMLEIKELFDLSEIPERIEIYDNSHIQGKFAVGVMVVAGKSGFDKKEYRVFSLSSHDSITGFSTLTNNLDPVVKQQYDTNGTYNTTVGDDYDMFRQVLTRRLTRLKQEPYKLPSLMIIDGGRGHVGIVKEVMDKFKMNIPFVCMSKGPDRNAGLEQFHMVGKEVFTLDKNLPVMKYLQILRDAAHSFAIKNHRLGRSRTIKLSSLDNIKGIGKTRKKSLLHYFGSYKAVCDATIDELVKVHGISKSLAEMIFRTLHQS.

The region spanning 20-97 is the GIY-YIG domain; sequence ECAGVYQMFD…IKKFQPKFNI (78 aa). Residues 209 to 244 enclose the UVR domain; it reads KELQENLSKKMEELSSHMYFEEAAEIRDRIKALSYV.

The protein belongs to the UvrC family. As to quaternary structure, interacts with UvrB in an incision complex.

It is found in the cytoplasm. Its function is as follows. The UvrABC repair system catalyzes the recognition and processing of DNA lesions. UvrC both incises the 5' and 3' sides of the lesion. The N-terminal half is responsible for the 3' incision and the C-terminal half is responsible for the 5' incision. The chain is UvrABC system protein C from Rickettsia canadensis (strain McKiel).